The primary structure comprises 226 residues: Enolase-phosphatase E1 (226 aa).

It belongs to the HAD-like hydrolase superfamily. MasA/MtnC family. Monomer. Mg(2+) is required as a cofactor.

The catalysed reaction is 5-methylsulfanyl-2,3-dioxopentyl phosphate + H2O = 1,2-dihydroxy-5-(methylsulfanyl)pent-1-en-3-one + phosphate. It functions in the pathway amino-acid biosynthesis; L-methionine biosynthesis via salvage pathway; L-methionine from S-methyl-5-thio-alpha-D-ribose 1-phosphate: step 3/6. It participates in amino-acid biosynthesis; L-methionine biosynthesis via salvage pathway; L-methionine from S-methyl-5-thio-alpha-D-ribose 1-phosphate: step 4/6. Bifunctional enzyme that catalyzes the enolization of 2,3-diketo-5-methylthiopentyl-1-phosphate (DK-MTP-1-P) into the intermediate 2-hydroxy-3-keto-5-methylthiopentenyl-1-phosphate (HK-MTPenyl-1-P), which is then dephosphorylated to form the acireductone 1,2-dihydroxy-3-keto-5-methylthiopentene (DHK-MTPene). The sequence is that of Enolase-phosphatase E1 from Alcanivorax borkumensis (strain ATCC 700651 / DSM 11573 / NCIMB 13689 / SK2).